The primary structure comprises 263 residues: Putative aliphatic sulfonates transport permease protein SsuC (263 aa).

Residues 1-13 (MATPVKKWLLRVA) lie on the Cytoplasmic side of the membrane. Residues 14-34 (PWFLPVGIVAVWQLASSVGWL) traverse the membrane as a helical segment. Topologically, residues 35–43 (STRILPSPE) are periplasmic. Residues 44–64 (GVVTAFWTLSASGELWQHLAI) traverse the membrane as a helical segment. The 185-residue stretch at 58 to 242 (LWQHLAISSW…LLGKLADVSA (185 aa)) folds into the ABC transmembrane type-1 domain. At 65–68 (SSWR) the chain is on the cytoplasmic side. A helical transmembrane segment spans residues 69–89 (ALIGFSIGGSLGLILGLISGL). The Periplasmic segment spans residues 90-102 (SRWGERLLDTSIQ). The helical transmembrane segment at 103 to 122 (MLRNVPHLALIPLVILWFGI) threads the bilayer. Residues 123 to 125 (DES) are Cytoplasmic-facing. The helical transmembrane segment at 126–148 (AKIFLVALGTLFPIYINTWHGIR) threads the bilayer. Topologically, residues 149–164 (NIDRGLVEMARSYGLS) are periplasmic. The helical transmembrane segment at 165-185 (GIPLFIHVILPGALPSIMVGV) threads the bilayer. Over 186–187 (RF) the chain is Cytoplasmic. Residues 188 to 208 (ALGLMWLTLIVAETISANSGI) traverse the membrane as a helical segment. The Periplasmic portion of the chain corresponds to 209–217 (GYLAMNARE). Residues 218-238 (FLQTDVVVVAIILYALLGKLA) form a helical membrane-spanning segment. Topologically, residues 239–263 (DVSAQLLERLWLRWNPAYHLKEATV) are cytoplasmic.

It belongs to the binding-protein-dependent transport system permease family. CysTW subfamily.

It localises to the cell inner membrane. Part of a binding-protein-dependent transport system for aliphatic sulfonates. Probably responsible for the translocation of the substrate across the membrane. In Escherichia coli (strain K12), this protein is Putative aliphatic sulfonates transport permease protein SsuC (ssuC).